Reading from the N-terminus, the 490-residue chain is Trigger factor (490 aa).

In terms of domain architecture, PPIase FKBP-type spans 161–247 (GDQVIVDIEA…VHEVKEAELP (87 aa)). Residues 441 to 460 (AEPAEGTEPAAEEAVTAPEV) are compositionally biased toward low complexity. The disordered stretch occupies residues 441–490 (AEPAEGTEPAAEEAVTAPEVVDGETTPASESAESLAVTETGSRADDDQAS). Polar residues predominate over residues 466–481 (TPASESAESLAVTETG).

The protein belongs to the FKBP-type PPIase family. Tig subfamily.

It localises to the cytoplasm. The enzyme catalyses [protein]-peptidylproline (omega=180) = [protein]-peptidylproline (omega=0). In terms of biological role, involved in protein export. Acts as a chaperone by maintaining the newly synthesized protein in an open conformation. Functions as a peptidyl-prolyl cis-trans isomerase. The polypeptide is Trigger factor (Thermomicrobium roseum (strain ATCC 27502 / DSM 5159 / P-2)).